Reading from the N-terminus, the 215-residue chain is Probable phosphoglycerate mutase GpmB (215 aa).

Residues 8–15 (RHGETQWN), 21–22 (QG), arginine 58, 82–85 (ELDM), 104–105 (RR), and 151–152 (GM) contribute to the substrate site. The Tele-phosphohistidine intermediate role is filled by histidine 9. Glutamate 82 functions as the Proton donor/acceptor in the catalytic mechanism.

This sequence belongs to the phosphoglycerate mutase family. GpmB subfamily.

It catalyses the reaction (2R)-2-phosphoglycerate = (2R)-3-phosphoglycerate. It functions in the pathway carbohydrate degradation; glycolysis; pyruvate from D-glyceraldehyde 3-phosphate: step 3/5. In Cronobacter sakazakii (strain ATCC BAA-894) (Enterobacter sakazakii), this protein is Probable phosphoglycerate mutase GpmB.